The following is a 339-amino-acid chain: Glutamyl-tRNA reductase (339 aa).

Residues 50–53 (TCHR), S102, 107–109 (ETE), and Q113 each bind substrate. C51 acts as the Nucleophile in catalysis. Residue 181–186 (GYSDIN) coordinates NADP(+).

The protein belongs to the glutamyl-tRNA reductase family. As to quaternary structure, homodimer.

It catalyses the reaction (S)-4-amino-5-oxopentanoate + tRNA(Glu) + NADP(+) = L-glutamyl-tRNA(Glu) + NADPH + H(+). It participates in porphyrin-containing compound metabolism; protoporphyrin-IX biosynthesis; 5-aminolevulinate from L-glutamyl-tRNA(Glu): step 1/2. Its function is as follows. Catalyzes the NADPH-dependent reduction of glutamyl-tRNA(Glu) to glutamate 1-semialdehyde (GSA). This chain is Glutamyl-tRNA reductase, found in Chlamydia pneumoniae (Chlamydophila pneumoniae).